The primary structure comprises 446 residues: Homocitrate synthase, mitochondrial (446 aa).

Positions 1–14 (MCATDNAPAANAAP) are enriched in low complexity. The interval 1 to 36 (MCATDNAPAANAAPEKPSNVGVEVGHTGEQTNPYGA) is disordered. The Pyruvate carboxyltransferase domain occupies 48–307 (FQLIESTLRE…HKLRDLENLV (260 aa)). Arg56 serves as a coordination point for 2-oxoglutarate. Glu57 lines the Mg(2+) pocket. The 2-oxoglutarate site is built by His116, Arg176, and Thr210. Mg(2+)-binding residues include His237 and His239. His334 (proton acceptor) is an active-site residue. Positions 422 to 446 (TPTVAATEGPAVEDEPAAKKAKTEE) are disordered. Basic and acidic residues predominate over residues 437-446 (PAAKKAKTEE).

It belongs to the alpha-IPM synthase/homocitrate synthase family. Homocitrate synthase LYS20/LYS21 subfamily. Requires Mg(2+) as cofactor. The cofactor is Mn(2+).

It localises to the mitochondrion. It carries out the reaction acetyl-CoA + 2-oxoglutarate + H2O = (2R)-homocitrate + CoA + H(+). It functions in the pathway amino-acid biosynthesis; L-lysine biosynthesis via AAA pathway; L-alpha-aminoadipate from 2-oxoglutarate: step 1/5. Catalyzes the aldol-type condensation of 2-oxoglutarate with acetyl-CoA to yield homocitrate. Carries out the first step of the alpha-aminoadipate (AAA) lysine biosynthesis pathway. This is Homocitrate synthase, mitochondrial (LYS1) from Yarrowia lipolytica (strain CLIB 122 / E 150) (Yeast).